The following is an 85-amino-acid chain: Antitoxin VapB43 (85 aa).

A disordered region spans residues 37-60 (GLNPPKPQAAGRYRVQPSGKGGLR).

In terms of biological role, antitoxin component of a type II toxin-antitoxin (TA) system. This chain is Antitoxin VapB43 (vapB43), found in Mycobacterium tuberculosis (strain CDC 1551 / Oshkosh).